Here is a 379-residue protein sequence, read N- to C-terminus: 1-deoxy-D-xylulose 5-phosphate reductoisomerase (379 aa).

NADPH-binding residues include T10, G11, S12, V13, and N121. K122 provides a ligand contact to 1-deoxy-D-xylulose 5-phosphate. NADPH is bound at residue E123. D147 lines the Mn(2+) pocket. Residues S148, E149, S173, and H196 each contribute to the 1-deoxy-D-xylulose 5-phosphate site. A Mn(2+)-binding site is contributed by E149. NADPH is bound at residue G202. 1-deoxy-D-xylulose 5-phosphate contacts are provided by S209, N214, K215, and E218. E218 contacts Mn(2+).

It belongs to the DXR family. Mg(2+) is required as a cofactor. It depends on Mn(2+) as a cofactor.

The enzyme catalyses 2-C-methyl-D-erythritol 4-phosphate + NADP(+) = 1-deoxy-D-xylulose 5-phosphate + NADPH + H(+). It participates in isoprenoid biosynthesis; isopentenyl diphosphate biosynthesis via DXP pathway; isopentenyl diphosphate from 1-deoxy-D-xylulose 5-phosphate: step 1/6. In terms of biological role, catalyzes the NADPH-dependent rearrangement and reduction of 1-deoxy-D-xylulose-5-phosphate (DXP) to 2-C-methyl-D-erythritol 4-phosphate (MEP). This chain is 1-deoxy-D-xylulose 5-phosphate reductoisomerase, found in Chlamydia abortus (strain DSM 27085 / S26/3) (Chlamydophila abortus).